The following is a 192-amino-acid chain: Large ribosomal subunit protein uL5 (192 aa).

It belongs to the universal ribosomal protein uL5 family. In terms of assembly, part of the 50S ribosomal subunit; part of the 5S rRNA/L5/L18/L25 subcomplex. Contacts the 5S rRNA and the P site tRNA. Forms a bridge to the 30S subunit in the 70S ribosome.

Functionally, this is one of the proteins that bind and probably mediate the attachment of the 5S RNA into the large ribosomal subunit, where it forms part of the central protuberance. In the 70S ribosome it contacts protein S13 of the 30S subunit (bridge B1b), connecting the 2 subunits; this bridge is implicated in subunit movement. Contacts the P site tRNA; the 5S rRNA and some of its associated proteins might help stabilize positioning of ribosome-bound tRNAs. This is Large ribosomal subunit protein uL5 from Zymomonas mobilis subsp. mobilis (strain ATCC 31821 / ZM4 / CP4).